Here is a 308-residue protein sequence, read N- to C-terminus: Pseudouridine-5'-phosphate glycosidase (308 aa).

The Proton donor role is filled by Glu-28. The substrate site is built by Lys-89 and Val-109. Residue Asp-141 coordinates Mn(2+). Residue 143–145 (SAD) coordinates substrate. The active-site Nucleophile is Lys-162.

Belongs to the pseudouridine-5'-phosphate glycosidase family. Homotrimer. Mn(2+) is required as a cofactor.

It catalyses the reaction D-ribose 5-phosphate + uracil = psi-UMP + H2O. Functionally, catalyzes the reversible cleavage of pseudouridine 5'-phosphate (PsiMP) to ribose 5-phosphate and uracil. Functions biologically in the cleavage direction, as part of a pseudouridine degradation pathway. The polypeptide is Pseudouridine-5'-phosphate glycosidase (Brachyspira hyodysenteriae (strain ATCC 49526 / WA1)).